Here is a 351-residue protein sequence, read N- to C-terminus: Histidinol-phosphate aminotransferase (351 aa).

K213 carries the N6-(pyridoxal phosphate)lysine modification.

Belongs to the class-II pyridoxal-phosphate-dependent aminotransferase family. Histidinol-phosphate aminotransferase subfamily. In terms of assembly, homodimer. Pyridoxal 5'-phosphate serves as cofactor.

It catalyses the reaction L-histidinol phosphate + 2-oxoglutarate = 3-(imidazol-4-yl)-2-oxopropyl phosphate + L-glutamate. The catalysed reaction is L-histidine + 2-oxoglutarate = 3-(imidazol-5-yl)pyruvate + L-glutamate. It functions in the pathway amino-acid biosynthesis; L-histidine biosynthesis; L-histidine from 5-phospho-alpha-D-ribose 1-diphosphate: step 7/9. This chain is Histidinol-phosphate aminotransferase, found in Caldanaerobacter subterraneus subsp. tengcongensis (strain DSM 15242 / JCM 11007 / NBRC 100824 / MB4) (Thermoanaerobacter tengcongensis).